The primary structure comprises 635 residues: Chaperone protein HtpG (635 aa).

Residues 1 to 343 (MTAEATVETR…SNDLSLNVSR (343 aa)) form an a; substrate-binding region. A b region spans residues 344–560 (EILQQDPNID…EHDMGAQMRR (217 aa)). The segment at 561–635 (LLEAAGQAVP…LNKLLLELSN (75 aa)) is c.

This sequence belongs to the heat shock protein 90 family. In terms of assembly, homodimer.

It is found in the cytoplasm. Its function is as follows. Molecular chaperone. Has ATPase activity. The sequence is that of Chaperone protein HtpG from Saccharophagus degradans (strain 2-40 / ATCC 43961 / DSM 17024).